A 147-amino-acid polypeptide reads, in one-letter code: UPF0735 ACT domain-containing protein Cthe_1377 (147 aa).

The ACT domain maps to 71 to 146 (TLFFTVEDYA…GVKRQEILAR (76 aa)).

This sequence belongs to the UPF0735 family.

This chain is UPF0735 ACT domain-containing protein Cthe_1377, found in Acetivibrio thermocellus (strain ATCC 27405 / DSM 1237 / JCM 9322 / NBRC 103400 / NCIMB 10682 / NRRL B-4536 / VPI 7372) (Clostridium thermocellum).